The following is a 448-amino-acid chain: Probable glycine dehydrogenase (decarboxylating) subunit 1 (448 aa).

Belongs to the GcvP family. N-terminal subunit subfamily. As to quaternary structure, the glycine cleavage system is composed of four proteins: P, T, L and H. In this organism, the P 'protein' is a heterodimer of two subunits.

It carries out the reaction N(6)-[(R)-lipoyl]-L-lysyl-[glycine-cleavage complex H protein] + glycine + H(+) = N(6)-[(R)-S(8)-aminomethyldihydrolipoyl]-L-lysyl-[glycine-cleavage complex H protein] + CO2. In terms of biological role, the glycine cleavage system catalyzes the degradation of glycine. The P protein binds the alpha-amino group of glycine through its pyridoxal phosphate cofactor; CO(2) is released and the remaining methylamine moiety is then transferred to the lipoamide cofactor of the H protein. This Caulobacter vibrioides (strain ATCC 19089 / CIP 103742 / CB 15) (Caulobacter crescentus) protein is Probable glycine dehydrogenase (decarboxylating) subunit 1.